We begin with the raw amino-acid sequence, 77 residues long: Small ribosomal subunit protein bS16c (77 aa).

Belongs to the bacterial ribosomal protein bS16 family.

The protein resides in the plastid. The protein localises to the cyanelle. The protein is Small ribosomal subunit protein bS16c of Cyanophora paradoxa.